A 466-amino-acid chain; its full sequence is Cytochrome P450 85A1 (466 aa).

The chain crosses the membrane as a helical span at residues 1 to 21; sequence MVLAVLIGVLVGIVLVSSLLL. C416 is a heme binding site.

It belongs to the cytochrome P450 family. It depends on heme as a cofactor.

The protein localises to the membrane. It carries out the reaction 6-deoxoteasterone + reduced [NADPH--hemoprotein reductase] + O2 = 6alpha-hydroxyteasterone + oxidized [NADPH--hemoprotein reductase] + H2O + H(+). The enzyme catalyses 6alpha-hydroxytyphasterol + reduced [NADPH--hemoprotein reductase] + O2 = teasterone + oxidized [NADPH--hemoprotein reductase] + 2 H2O + H(+). The catalysed reaction is 3-dehydro-6-deoxoteasterone + reduced [NADPH--hemoprotein reductase] + O2 = 3-dehydro-6alpha-hydroxyteasterone + oxidized [NADPH--hemoprotein reductase] + H2O + H(+). It catalyses the reaction 3-dehydro-6alpha-hydroxyteasterone + reduced [NADPH--hemoprotein reductase] + O2 = 3-dehydroteasterone + oxidized [NADPH--hemoprotein reductase] + 2 H2O + H(+). It carries out the reaction 6-deoxotyphasterol + reduced [NADPH--hemoprotein reductase] + O2 = 6alpha-hydroxytyphasterol + oxidized [NADPH--hemoprotein reductase] + H2O + H(+). The enzyme catalyses 6alpha-hydroxytyphasterol + reduced [NADPH--hemoprotein reductase] + O2 = typhasterol + oxidized [NADPH--hemoprotein reductase] + 2 H2O + H(+). The catalysed reaction is 6-deoxocastasterone + reduced [NADPH--hemoprotein reductase] + O2 = 6alpha-hydroxycastasterone + oxidized [NADPH--hemoprotein reductase] + H2O + H(+). It catalyses the reaction 6alpha-hydroxycastasterone + reduced [NADPH--hemoprotein reductase] + O2 = castasterone + oxidized [NADPH--hemoprotein reductase] + 2 H2O + H(+). It carries out the reaction 3-dehydro-6-deoxoteasterone + 2 reduced [NADPH--hemoprotein reductase] + 2 O2 = 3-dehydroteasterone + 2 oxidized [NADPH--hemoprotein reductase] + 3 H2O + 2 H(+). The enzyme catalyses 6-deoxocastasterone + 2 reduced [NADPH--hemoprotein reductase] + 2 O2 = castasterone + 2 oxidized [NADPH--hemoprotein reductase] + 3 H2O + 2 H(+). The catalysed reaction is 6-deoxoteasterone + 2 reduced [NADPH--hemoprotein reductase] + 2 O2 = teasterone + 2 oxidized [NADPH--hemoprotein reductase] + 3 H2O + 2 H(+). It catalyses the reaction 6-deoxotyphasterol + 2 reduced [NADPH--hemoprotein reductase] + 2 O2 = typhasterol + 2 oxidized [NADPH--hemoprotein reductase] + 3 H2O + 2 H(+). It participates in plant hormone biosynthesis; brassinosteroid biosynthesis. Its function is as follows. Involved in reduction steps of the biosynthesis of plant campesterol-derivative steroids, ending to castasterone (CS) but missing brassinolide (BL). Catalyzes the C6-oxidation step in brassinosteroids biosynthesis; the conversion of 6-deoxoteasterone (6-deoxoTE) to teasterone (TE), 3-dehydro-6-deoxoteasterone (6-deoxo3DT, 6-deoxo-3-DHT) to 3-dehydroteasterone (3DT, 3-DHT), 6-deoxotyphasterol (6-deoxoTY) to typhasterol (TY) and of 6-deoxocastasterone (6-deoxoCS) to castasterone (CS). This chain is Cytochrome P450 85A1, found in Brachypodium distachyon (Purple false brome).